The primary structure comprises 104 residues: MTQVAKNDHRLMQVLLSPVVSEKATLVADKNEQVVFEVARDANKGEVKAAVELLFKVEVESVQILNQKGKQKRFGRFMGRRDHVKKAYVSLKPGQEINFEAEAK.

This sequence belongs to the universal ribosomal protein uL23 family. As to quaternary structure, part of the 50S ribosomal subunit. Contacts protein L29, and trigger factor when it is bound to the ribosome.

One of the early assembly proteins it binds 23S rRNA. One of the proteins that surrounds the polypeptide exit tunnel on the outside of the ribosome. Forms the main docking site for trigger factor binding to the ribosome. The protein is Large ribosomal subunit protein uL23 of Ralstonia nicotianae (strain ATCC BAA-1114 / GMI1000) (Ralstonia solanacearum).